We begin with the raw amino-acid sequence, 537 residues long: Biotin carboxylase, chloroplastic (537 aa).

The N-terminal 71 residues, 1–71 (MDASMITNSK…ATSGGLGVTC (71 aa)), are a transit peptide targeting the chloroplast. ATP contacts are provided by residues lysine 188, lysine 230, 236-237 (GG), 272-275 (EKFV), and histidine 280. The ATP-grasp domain occupies 192–389 (RETMKNAGVP…LIEEQIRVAM (198 aa)). Lysine 309 contributes to the hydrogencarbonate binding site. 2 residues coordinate ATP: glutamate 347 and glutamate 360. Positions 347, 360, and 362 each coordinate Mg(2+). Positions 347, 360, and 362 each coordinate Mn(2+). Residues arginine 364, valine 367, and arginine 410 each coordinate hydrogencarbonate. Residue arginine 364 is part of the active site. Arginine 410 is a biotin binding site.

In terms of assembly, acetyl-CoA carboxylase is a heterohexamer composed of biotin carboxyl carrier protein, biotin carboxylase and two subunits each of ACCase subunit alpha and ACCase plastid-coded subunit beta (accD). Mg(2+) serves as cofactor. The cofactor is Mn(2+). In terms of tissue distribution, accumulates in fatty acids synthesizing tissues. Mostly expressed in siliques, developing leaves, and flowers, present in roots and embryos (especially at torpedo stage), and, to a lower extent, in mature leaves.

Its subcellular location is the plastid. It is found in the chloroplast. The catalysed reaction is N(6)-biotinyl-L-lysyl-[protein] + hydrogencarbonate + ATP = N(6)-carboxybiotinyl-L-lysyl-[protein] + ADP + phosphate + H(+). It functions in the pathway lipid metabolism; malonyl-CoA biosynthesis; malonyl-CoA from acetyl-CoA: step 1/1. This protein is a component of the acetyl coenzyme A carboxylase complex; first, biotin carboxylase catalyzes the carboxylation of the carrier protein and then the transcarboxylase transfers the carboxyl group to form malonyl-CoA. The sequence is that of Biotin carboxylase, chloroplastic (CAC2) from Arabidopsis thaliana (Mouse-ear cress).